A 407-amino-acid chain; its full sequence is MSIENKNTGVKKVVLAYSGGLDTSAIIPWLKENYDNCEIIAFCADVGQGEEELVGLTEKALASGASECHIVDLKEEFVKDYIYPTMATGAIYEGTYLLGTSMARPIIAKAQVEVARKVGADALCHGCTGKGNDQVRFEGCFAALAPDLKVIAPWREWTMQSREDLLDYLAERNIKTSASATKIYSRDANAFHISHEGGELEDPWNEPSKGVWTLTADPEDAPNQPEYVSLEVENGRVTKVNGEALTPYAALMKLNAIAAPHGVGRIDITENRLVGMKSRGCYETPGGTVMFAALRAIEELVLDKTSRTWREQVGAQMAHLVYDGRWFTPLCKSLLAASESLAESVNGEVVVKLYKGHAIAVKKRSPNSLYSEAFATFGEDQVYDQKHAEGFIRLYSLASRIRALNAK.

ATP is bound by residues 16 to 24 and A44; that span reads AYSGGLDTS. Y96 and S101 together coordinate L-citrulline. G126 is an ATP binding site. L-aspartate contacts are provided by T128, N132, and D133. An L-citrulline-binding site is contributed by N132. R136, S185, S194, E270, and Y282 together coordinate L-citrulline.

Belongs to the argininosuccinate synthase family. Type 1 subfamily. Homotetramer.

The protein resides in the cytoplasm. The enzyme catalyses L-citrulline + L-aspartate + ATP = 2-(N(omega)-L-arginino)succinate + AMP + diphosphate + H(+). The protein operates within amino-acid biosynthesis; L-arginine biosynthesis; L-arginine from L-ornithine and carbamoyl phosphate: step 2/3. In Shewanella putrefaciens (strain CN-32 / ATCC BAA-453), this protein is Argininosuccinate synthase.